A 101-amino-acid polypeptide reads, in one-letter code: Urease subunit beta (101 aa).

This sequence belongs to the urease beta subunit family. In terms of assembly, heterotrimer of UreA (gamma), UreB (beta) and UreC (alpha) subunits. Three heterotrimers associate to form the active enzyme.

The protein localises to the cytoplasm. The catalysed reaction is urea + 2 H2O + H(+) = hydrogencarbonate + 2 NH4(+). The protein operates within nitrogen metabolism; urea degradation; CO(2) and NH(3) from urea (urease route): step 1/1. This chain is Urease subunit beta, found in Azotobacter vinelandii (strain DJ / ATCC BAA-1303).